A 434-amino-acid chain; its full sequence is Perilipin-3 (434 aa).

Positions 1 to 22 (MSADGAEADGSTQVTVEEPVQQ) are disordered. S2 carries the N-acetylserine modification. S31 carries the post-translational modification Phosphoserine. At K65 the chain carries N6-acetyllysine. S91 bears the Phosphoserine mark. A Glycyl lysine isopeptide (Lys-Gly) (interchain with G-Cter in SUMO1) cross-link involves residue K122. S130 and S148 each carry phosphoserine. Phosphothreonine is present on T170. Phosphoserine is present on residues S175 and S179. T216 is modified (phosphothreonine). 2 positions are modified to phosphoserine: S217 and S241. Y251 is subject to Phosphotyrosine. 2 coiled-coil regions span residues 252–277 (EHSLGKLRATKQRAQEALLQLSQVLS) and 353–377 (TNVKDQVQQARRQVEDLQATFSSIH).

It belongs to the perilipin family. Homooligomer. Interacts with M6PR (via the cytoplasmic domain). Interacts with IGF2R (via the cytoplasmic domain). As to quaternary structure, may exist as a homodimer. In terms of processing, phosphorylation at Tyr-251 by isoform 1 of CHKA (CHKalpha2) promotes dissociation from lipid droplets: dissociation is followed by recruitment of autophagosome machinery to lipid droplets and subsequent lipid droplet lipolysis.

The protein resides in the lipid droplet. Its subcellular location is the endosome membrane. It is found in the cytoplasm. In terms of biological role, structural component of lipid droplets, which is required for the formation and maintenance of lipid storage droplets. Required for the transport of mannose 6-phosphate receptors (MPR) from endosomes to the trans-Golgi network. The protein is Perilipin-3 (PLIN3) of Homo sapiens (Human).